The following is a 455-amino-acid chain: Bifunctional protein GlmU (455 aa).

The tract at residues 1-226 is pyrophosphorylase; it reads MSLDIVILAA…AMEVQGANDR (226 aa). UDP-N-acetyl-alpha-D-glucosamine contacts are provided by residues 8-11, Lys22, Gln73, 78-79, 99-101, Gly136, Glu151, Asn166, and Asn224; these read LAAG, GT, and YGD. Residue Asp101 participates in Mg(2+) binding. Asn224 is a binding site for Mg(2+). The interval 227–247 is linker; the sequence is KQLSELERHYQMREARRLMAA. Residues 248–455 are N-acetyltransferase; the sequence is GVTLRDPARF…WKRPVKISKD (208 aa). Positions 330 and 348 each coordinate UDP-N-acetyl-alpha-D-glucosamine. The Proton acceptor role is filled by His360. Residues Tyr363 and Asn374 each coordinate UDP-N-acetyl-alpha-D-glucosamine. Acetyl-CoA is bound by residues Ala377, 383–384, Ser402, Ala420, and Arg437; that span reads NY.

This sequence in the N-terminal section; belongs to the N-acetylglucosamine-1-phosphate uridyltransferase family. The protein in the C-terminal section; belongs to the transferase hexapeptide repeat family. In terms of assembly, homotrimer. The cofactor is Mg(2+).

It is found in the cytoplasm. The enzyme catalyses alpha-D-glucosamine 1-phosphate + acetyl-CoA = N-acetyl-alpha-D-glucosamine 1-phosphate + CoA + H(+). The catalysed reaction is N-acetyl-alpha-D-glucosamine 1-phosphate + UTP + H(+) = UDP-N-acetyl-alpha-D-glucosamine + diphosphate. Its pathway is nucleotide-sugar biosynthesis; UDP-N-acetyl-alpha-D-glucosamine biosynthesis; N-acetyl-alpha-D-glucosamine 1-phosphate from alpha-D-glucosamine 6-phosphate (route II): step 2/2. It functions in the pathway nucleotide-sugar biosynthesis; UDP-N-acetyl-alpha-D-glucosamine biosynthesis; UDP-N-acetyl-alpha-D-glucosamine from N-acetyl-alpha-D-glucosamine 1-phosphate: step 1/1. It participates in bacterial outer membrane biogenesis; LPS lipid A biosynthesis. Functionally, catalyzes the last two sequential reactions in the de novo biosynthetic pathway for UDP-N-acetylglucosamine (UDP-GlcNAc). The C-terminal domain catalyzes the transfer of acetyl group from acetyl coenzyme A to glucosamine-1-phosphate (GlcN-1-P) to produce N-acetylglucosamine-1-phosphate (GlcNAc-1-P), which is converted into UDP-GlcNAc by the transfer of uridine 5-monophosphate (from uridine 5-triphosphate), a reaction catalyzed by the N-terminal domain. The polypeptide is Bifunctional protein GlmU (Pseudomonas syringae pv. syringae (strain B728a)).